The sequence spans 351 residues: Transaldolase (351 aa).

Lys138 (schiff-base intermediate with substrate) is an active-site residue.

It belongs to the transaldolase family. Type 2 subfamily.

The protein localises to the cytoplasm. The enzyme catalyses D-sedoheptulose 7-phosphate + D-glyceraldehyde 3-phosphate = D-erythrose 4-phosphate + beta-D-fructose 6-phosphate. It functions in the pathway carbohydrate degradation; pentose phosphate pathway; D-glyceraldehyde 3-phosphate and beta-D-fructose 6-phosphate from D-ribose 5-phosphate and D-xylulose 5-phosphate (non-oxidative stage): step 2/3. Functionally, transaldolase is important for the balance of metabolites in the pentose-phosphate pathway. In Neisseria meningitidis serogroup A / serotype 4A (strain DSM 15465 / Z2491), this protein is Transaldolase (tal).